We begin with the raw amino-acid sequence, 337 residues long: DNA-directed RNA polymerase subunit alpha (337 aa).

An alpha N-terminal domain (alpha-NTD) region spans residues 1-233 (MVREEVVGST…DLFIPFLHAE (233 aa)). The interval 265-337 (KEIALKCIFI…FAIDLPKNKF (73 aa)) is alpha C-terminal domain (alpha-CTD).

Belongs to the RNA polymerase alpha chain family. As to quaternary structure, in plastids the minimal PEP RNA polymerase catalytic core is composed of four subunits: alpha, beta, beta', and beta''. When a (nuclear-encoded) sigma factor is associated with the core the holoenzyme is formed, which can initiate transcription.

The protein resides in the plastid. The protein localises to the chloroplast. It carries out the reaction RNA(n) + a ribonucleoside 5'-triphosphate = RNA(n+1) + diphosphate. Its function is as follows. DNA-dependent RNA polymerase catalyzes the transcription of DNA into RNA using the four ribonucleoside triphosphates as substrates. This chain is DNA-directed RNA polymerase subunit alpha, found in Acorus calamus (Sweet flag).